The primary structure comprises 124 residues: Holo-[acyl-carrier-protein] synthase (124 aa).

Asp-8 and Glu-56 together coordinate Mg(2+).

It belongs to the P-Pant transferase superfamily. AcpS family. Mg(2+) serves as cofactor.

The protein resides in the cytoplasm. The enzyme catalyses apo-[ACP] + CoA = holo-[ACP] + adenosine 3',5'-bisphosphate + H(+). Transfers the 4'-phosphopantetheine moiety from coenzyme A to a Ser of acyl-carrier-protein. This is Holo-[acyl-carrier-protein] synthase from Nitratidesulfovibrio vulgaris (strain DP4) (Desulfovibrio vulgaris).